The chain runs to 263 residues: Endonuclease 8 (263 aa).

The Schiff-base intermediate with DNA role is filled by P2. Residue E3 is the Proton donor of the active site. K53 functions as the Proton donor; for beta-elimination activity in the catalytic mechanism. DNA is bound by residues Q70, R125, and N169. The FPG-type zinc finger occupies 229–263 (KVFHRDGEACERCGGIIEKTTLSSRPFYWCPHCQK). R253 acts as the Proton donor; for delta-elimination activity in catalysis.

The protein belongs to the FPG family. Zn(2+) serves as cofactor.

It carries out the reaction 2'-deoxyribonucleotide-(2'-deoxyribose 5'-phosphate)-2'-deoxyribonucleotide-DNA = a 3'-end 2'-deoxyribonucleotide-(2,3-dehydro-2,3-deoxyribose 5'-phosphate)-DNA + a 5'-end 5'-phospho-2'-deoxyribonucleoside-DNA + H(+). Functionally, involved in base excision repair of DNA damaged by oxidation or by mutagenic agents. Acts as a DNA glycosylase that recognizes and removes damaged bases. Has a preference for oxidized pyrimidines, such as thymine glycol, 5,6-dihydrouracil and 5,6-dihydrothymine. Has AP (apurinic/apyrimidinic) lyase activity and introduces nicks in the DNA strand. Cleaves the DNA backbone by beta-delta elimination to generate a single-strand break at the site of the removed base with both 3'- and 5'-phosphates. The sequence is that of Endonuclease 8 from Salmonella agona (strain SL483).